The primary structure comprises 311 residues: Ribonuclease HIII (311 aa).

An RNase H type-2 domain is found at 95–311 (MSIVGSDEVG…NTEKAFRLLK (217 aa)). A divalent metal cation is bound by residues D101, E102, and D206.

Belongs to the RNase HII family. RnhC subfamily. Mn(2+) serves as cofactor. Mg(2+) is required as a cofactor.

The protein localises to the cytoplasm. The catalysed reaction is Endonucleolytic cleavage to 5'-phosphomonoester.. Endonuclease that specifically degrades the RNA of RNA-DNA hybrids. The polypeptide is Ribonuclease HIII (Bacillus cereus (strain ZK / E33L)).